Here is a 329-residue protein sequence, read N- to C-terminus: Formimidoylglutamase (329 aa).

Positions 133, 159, 161, 163, 253, and 255 each coordinate Mn(2+).

This sequence belongs to the arginase family. The cofactor is Mn(2+).

The enzyme catalyses N-formimidoyl-L-glutamate + H2O = formamide + L-glutamate. The protein operates within amino-acid degradation; L-histidine degradation into L-glutamate; L-glutamate from N-formimidoyl-L-glutamate (hydrolase route): step 1/1. In terms of biological role, catalyzes the conversion of N-formimidoyl-L-glutamate to L-glutamate and formamide. The chain is Formimidoylglutamase from Streptococcus gordonii (strain Challis / ATCC 35105 / BCRC 15272 / CH1 / DL1 / V288).